Here is a 314-residue protein sequence, read N- to C-terminus: Solute carrier family 25 member 44 (314 aa).

Solcar repeat units lie at residues 18–100 (KKFY…TRKF), 107–210 (SNTV…YAEQ), and 220–302 (PHIV…LKKL). The next 6 helical transmembrane spans lie at 20–42 (FYVFGVAMTMMIRVSVYPFTLIR), 71–90 (TGLYRGFLVNTFTLISGQCY), 113–133 (LVAGGSASLVAQSITVPIDVV), 185–201 (GYVASLLTYIPNSAVWW), 222–239 (IVFQAVSGPLAAATASIL), and 278–296 (LSARIISATPSTIVIVVGY).

The protein belongs to the mitochondrial carrier (TC 2.A.29) family.

Its subcellular location is the mitochondrion membrane. The catalysed reaction is L-valine(in) = L-valine(out). It catalyses the reaction L-leucine(in) = L-leucine(out). Mitochondrial solute transporter which transports branched-chain amino acid (BCAA; valine, leucine and isoleucine) into mitochondria in brown adipose tissue (BAT). BAT is involved in BCAA catabolism and actively utilizes BCAA in the mitochondria for thermogenesis. This Homo sapiens (Human) protein is Solute carrier family 25 member 44.